Consider the following 119-residue polypeptide: Short coiled-coil protein A (119 aa).

Positions methionine 1–glycine 10 are enriched in acidic residues. Residues methionine 1–proline 26 form a disordered region. The stretch at methionine 48–leucine 95 forms a coiled coil.

This sequence belongs to the SCOC family.

The protein resides in the golgi apparatus membrane. The protein localises to the golgi apparatus. Its subcellular location is the trans-Golgi network. It localises to the cytoplasm. It is found in the cytosol. Functionally, positive regulator of amino acid starvation-induced autophagy. The protein is Short coiled-coil protein A (scoca) of Danio rerio (Zebrafish).